Reading from the N-terminus, the 207-residue chain is MGKGTLYIVSAPSGAGKSSLISAMLEKNPTYAMKVSVSHTTRGMRPGEQDGVHYHFVEKEHFEDLITKGEFLEYAEVFGNYYGTSRVWIENTLDKGIDVFLDIDWQGARQIREQMPHAKSIFILPPSNGELERRLNTRGQDSEAVIAKRMAEAKSEISHYNEYDYVIINDDFDTALMDFKAIIRAERLKQDKQAAKYSGMLDALLAE.

Residues 4–184 enclose the Guanylate kinase-like domain; the sequence is GTLYIVSAPS…ALMDFKAIIR (181 aa). 11–18 contacts ATP; the sequence is APSGAGKS.

This sequence belongs to the guanylate kinase family.

The protein resides in the cytoplasm. The enzyme catalyses GMP + ATP = GDP + ADP. In terms of biological role, essential for recycling GMP and indirectly, cGMP. The polypeptide is Guanylate kinase (Vibrio vulnificus (strain CMCP6)).